Here is a 111-residue protein sequence, read N- to C-terminus: MKRRSVCVGDTVYVLAGNDKGKQGKVLRCLKDKVVVEGINVRVKNIKRSQENPKGKRINIEAPLHISNVRLSIDNQPARLFVKVTEKGRELWNKHSDGSSSLYRLVRERKG.

This sequence belongs to the universal ribosomal protein uL24 family. In terms of assembly, part of the 50S ribosomal subunit.

One of two assembly initiator proteins, it binds directly to the 5'-end of the 23S rRNA, where it nucleates assembly of the 50S subunit. Its function is as follows. One of the proteins that surrounds the polypeptide exit tunnel on the outside of the subunit. This is Large ribosomal subunit protein uL24 from Chlamydia muridarum (strain MoPn / Nigg).